The primary structure comprises 135 residues: Large ribosomal subunit protein bL21 (135 aa).

The disordered stretch occupies residues 114 to 135; sequence EAEKETPVLDETPAEEVETAAE. Positions 125–135 are enriched in acidic residues; that stretch reads TPAEEVETAAE.

This sequence belongs to the bacterial ribosomal protein bL21 family. Part of the 50S ribosomal subunit. Contacts protein L20.

Its function is as follows. This protein binds to 23S rRNA in the presence of protein L20. The chain is Large ribosomal subunit protein bL21 from Nostoc punctiforme (strain ATCC 29133 / PCC 73102).